Reading from the N-terminus, the 199-residue chain is Ribonuclease HII (199 aa).

Positions 11–199 (SRVAGVDEVG…RRSFLRRLLG (189 aa)) constitute an RNase H type-2 domain. Residues aspartate 17, glutamate 18, and aspartate 113 each contribute to the a divalent metal cation site.

The protein belongs to the RNase HII family. The cofactor is Mn(2+). Mg(2+) serves as cofactor.

Its subcellular location is the cytoplasm. It catalyses the reaction Endonucleolytic cleavage to 5'-phosphomonoester.. In terms of biological role, endonuclease that specifically degrades the RNA of RNA-DNA hybrids. This Synechococcus sp. (strain CC9902) protein is Ribonuclease HII.